Consider the following 310-residue polypeptide: Putative S-adenosyl-L-methionine-dependent methyltransferase Mvan_1346 (310 aa).

S-adenosyl-L-methionine-binding positions include Asp-136 and 165–166 (DL).

The protein belongs to the UPF0677 family.

Its function is as follows. Exhibits S-adenosyl-L-methionine-dependent methyltransferase activity. The chain is Putative S-adenosyl-L-methionine-dependent methyltransferase Mvan_1346 from Mycolicibacterium vanbaalenii (strain DSM 7251 / JCM 13017 / BCRC 16820 / KCTC 9966 / NRRL B-24157 / PYR-1) (Mycobacterium vanbaalenii).